Reading from the N-terminus, the 1088-residue chain is MLANQANLIDNKRELEQHALVPYAQGKSIHQLFEEQAEAFPDRVAIVFENRRLSYQELNRKANQLARALLEKGVQTDSIVGVMMEKSIENVIAILAVLKAGGAYVPIDIEYPRDRIQYILQDSQTKIVLTQKSVSQLVHDVGYSGEVVVLDEEQLDARETANLHQPSKPTDLAYVIYTSGTTGKPKGTMLEHKGIANLQSFFQNSFGVTEQDRIGLFASMSFDASVWEMFMALLSGASLYILSKQTIHDFAAFEHYLSENELTIITLPPTYLTHLTPERITSLRIMITAGSASSAPLVNKWKDKLRYINAYGPTETSICATIWEAPSNQLSVQSVPIGKPIQNTHIYIVNEDLQLLPTGSEGELCIGGVGLARGYWNRPDLTAEKFVDNPFVPGEKMYRTGDLAKWLTDGTIEFLGRIDHQVKIRGHRIELGEIESVLLAHEHITEAVVIAREDQHAGQYLCAYYISQQEATPAQLRDYAAQKLPAYMLPSYFVKLDKMPLTPNDKIDRKALPEPDLTANQSQAAYHPPRTETESILVSIWQNVLGIEKIGIRDNFYSLGGDSIQAIQVVARLHSYQLKLETKDLLNYPTIEQVALFVKSTTRKSDQGIIAGNVPLTPIQKWFFGKNFTNTGHWNQSSVLYRPEGFDPKVIQSVMDKIIEHHDALRMVYQHENGNVVQHNRGLGGQLYDFFSYNLTAQPDVQQAIEAETQRLHSSMNLQEGPLVKVALFQTLHGDHLFLAIHHLVVDGISWRILFEDLATGYAQALAGQAISLPEKTDSFQSWSQWLQEYANEADLLSEIPYWESLESQAKNVSLPKDYEVTDCKQKSVRNMRIRLHPEETEQLLKHANQAYQTEINDLLLAALGLAFAEWSKLAQIVIHLEGHGREDIIEQANVARTVGWFTSQYPVLLDLKQTAPLSDYIKLTKENMRKIPRKGIGYDILKHVTLPENRGSLSFRVQPEVTFNYLGQFDADMRTELFTRSPYSGGNTLGADGKNNLSPESEVYTALNITGLIEGGELVLTFSYSSEQYREESIQQLSQSYQKHLLAIIAHCTEKKEVERTPSDFSVKGLQMEEMDDIFELLANTLR.

One can recognise a Carrier domain in the interval 528-602 (PPRTETESIL…QVALFVKSTT (75 aa)). Ser563 carries the O-(pantetheine 4'-phosphoryl)serine modification.

Belongs to the ATP-dependent AMP-binding enzyme family. As to quaternary structure, large multienzyme complex of TycA, TycB and TycC. Pantetheine 4'-phosphate is required as a cofactor.

The enzyme catalyses L-phenylalanine + ATP + H2O = D-phenylalanine + AMP + diphosphate + H(+). Its pathway is antibiotic biosynthesis; tyrocidine biosynthesis. In the first step of peptide synthesis this enzyme activates phenylalanine and racemizes it to the D-isomer. The protein is Tyrocidine synthase 1 (tycA) of Brevibacillus parabrevis.